The sequence spans 368 residues: Microtubule-associated protein Jupiter (368 aa).

S30 bears the Phosphoserine mark. T41 bears the Phosphothreonine mark. A compositionally biased stretch (basic and acidic residues) spans 81-93 (RRGQKSVDSHSRL). Residues 81–106 (RRGQKSVDSHSRLFGEPSRPITPGKN) are disordered. T102 is modified (phosphothreonine). S111, S146, and S157 each carry phosphoserine. 2 stretches are compositionally biased toward low complexity: residues 129–157 (NGNT…VSSS) and 238–248 (GRYGYSSQSRR). 3 disordered regions span residues 129–164 (NGNT…LKIN), 196–256 (SQGN…SPLN), and 316–368 (KPKK…SGLW). The span at 337–354 (GSDSAQTPTMNGANQVIN) shows a compositional bias: polar residues.

It belongs to the MAP Jupiter family.

Its subcellular location is the nucleus. The protein resides in the cytoplasm. It localises to the cytoskeleton. The protein localises to the spindle. Functionally, binds to all microtubule populations. The protein is Microtubule-associated protein Jupiter of Drosophila willistoni (Fruit fly).